Consider the following 217-residue polypeptide: Ribonuclease HII (217 aa).

In terms of domain architecture, RNase H type-2 spans 16-217; sequence YCIAGVDEVG…VARVLGTYHD (202 aa). Residues Asp-22, Glu-23, and Asp-114 each coordinate a divalent metal cation.

It belongs to the RNase HII family. It depends on Mn(2+) as a cofactor. Requires Mg(2+) as cofactor.

Its subcellular location is the cytoplasm. The catalysed reaction is Endonucleolytic cleavage to 5'-phosphomonoester.. In terms of biological role, endonuclease that specifically degrades the RNA of RNA-DNA hybrids. The protein is Ribonuclease HII of Colwellia psychrerythraea (strain 34H / ATCC BAA-681) (Vibrio psychroerythus).